Consider the following 541-residue polypeptide: Multidrug transporter protein MdtP (541 aa).

14 helical membrane passes run 14-34 (LLITGLIIAMFFSALDGTIVG), 40-60 (IVGDLGGLSMMTWLTTAYLLT), 79-99 (IVYVSGLIIFMAASALCGMAN), 112-132 (GIGGGIMMPMAMIVIGDLFTG), 141-161 (VFGAIYGLASVIGPQIGGWIV), 168-188 (WVFYINLPVGIIAVIFIARGL), 201-221 (IAGIFTMIVGVVSLLLALSFG), 229-249 (SWQILGLFALALIGIVSFIIV), 273-293 (LIGFFMSIGMFGAITFVPFFM), 307-327 (IMTPMMISMIITSIIGGQLVY), 329-349 (IGIKPQIITGMLVMAGGFLLL), 359-379 (LVATSFMAIIGLGMGLVMPIL), 401-420 (FFRSIGGTFGITMLGAVMNA), and 492-512 (LHSVFYTGLIFIAVGAVFTLF).

Belongs to the major facilitator superfamily. EmrB family.

Its subcellular location is the cell membrane. Multidrug efflux transporter. Contributes to resistance to several antibiotics, including fusidic acid, novobiocin, streptomycin and actinomycin, possibly by pumping these structurally unrelated antibiotics out of cells. This is Multidrug transporter protein MdtP from Bacillus subtilis (strain 168).